The primary structure comprises 340 residues: Adenosine receptor A2b (340 aa).

Residues 1-6 (MNTMKT) are Extracellular-facing. Residues 7 to 31 (TYIVLELIIAVLSIAGNVLVCWAVA) form a helical membrane-spanning segment. The Cytoplasmic segment spans residues 32 to 41 (INSTLKNATN). A helical transmembrane segment spans residues 42–65 (YFLVSLAVADIAVGLLAIPFAITI). The Extracellular segment spans residues 66–76 (SIGFQVDFHSC). The cysteines at positions 76 and 171 are disulfide-linked. A helical transmembrane segment spans residues 77–99 (LFFACFVLVLTQSSIFSLLAVAI). At 100–119 (DRYLAIKIPLRYNSLVTGKR) the chain is on the cytoplasmic side. A helical transmembrane segment spans residues 120–142 (ARGLIAVLWLLSFVIGLTPLMGW). Topologically, residues 143–178 (NKAMSGCPNSTNETGADHGAGHHGCFISCLFENVVT) are extracellular. N-linked (GlcNAc...) asparagine glycosylation is found at asparagine 151 and asparagine 154. Glutamate 174 contributes to the adenosine binding site. The helical transmembrane segment at 179–203 (MSYMVYFNFFGCVLLPLIIMLGIYI) threads the bilayer. At 204–235 (KIFMVACKQLHQIELMGNSRTTLQKEVHAAKS) the chain is on the cytoplasmic side. Residues 236–259 (LAIIVGLFAFCWLPLHILNCITHF) form a helical membrane-spanning segment. Asparagine 254 is a binding site for adenosine. The Extracellular segment spans residues 260 to 267 (HEEFSKSK). A helical membrane pass occupies residues 268-291 (PEWVMYVAIILSHANSVINPIIYA). Residues serine 279 and histidine 280 each coordinate adenosine. Residues 292 to 340 (YRIRDFRYTFHKIISKILCKTDDFPKCTTDNNQHLTVTNVNAPAASVTI) are Cytoplasmic-facing. The S-palmitoyl cysteine moiety is linked to residue cysteine 310.

This sequence belongs to the G-protein coupled receptor 1 family.

Its subcellular location is the cell membrane. Functionally, receptor for adenosine. The activity of this receptor is mediated by G proteins which activate adenylyl cyclase. This Gallus gallus (Chicken) protein is Adenosine receptor A2b (ADORA2B).